The chain runs to 297 residues: N-acetylneuraminate lyase (297 aa).

Aceneuramate-binding residues include Ser-47 and Thr-48. Tyr-137 (proton donor) is an active-site residue. The active-site Schiff-base intermediate with substrate is the Lys-165. The aceneuramate site is built by Thr-167, Gly-189, Asp-191, Glu-192, and Ser-208.

Belongs to the DapA family. NanA subfamily. In terms of assembly, homotetramer.

Its subcellular location is the cytoplasm. It catalyses the reaction aceneuramate = aldehydo-N-acetyl-D-mannosamine + pyruvate. The protein operates within amino-sugar metabolism; N-acetylneuraminate degradation; D-fructose 6-phosphate from N-acetylneuraminate: step 1/5. Its function is as follows. Catalyzes the reversible aldol cleavage of N-acetylneuraminic acid (sialic acid; Neu5Ac) to form pyruvate and N-acetylmannosamine (ManNAc) via a Schiff base intermediate. The sequence is that of N-acetylneuraminate lyase from Escherichia fergusonii (strain ATCC 35469 / DSM 13698 / CCUG 18766 / IAM 14443 / JCM 21226 / LMG 7866 / NBRC 102419 / NCTC 12128 / CDC 0568-73).